Consider the following 515-residue polypeptide: SWI/SNF global transcription activator complex subunit snf59 (515 aa).

Residues methionine 1–glutamate 226 are disordered. Composition is skewed to basic and acidic residues over residues threonine 7 to asparagine 37, glutamate 50 to asparagine 59, glutamate 73 to threonine 85, glutamate 94 to asparagine 103, and glutamate 116 to asparagine 125. Polar residues predominate over residues lysine 126–methionine 136. A compositionally biased stretch (basic and acidic residues) spans glutamate 140–glutamate 226.

Belongs to the RSC7/SWP82 family. SWP82 subfamily. As to quaternary structure, component of the SWI/SNF global transcription activator complex composed of at least arp9, arp42, snf5, snf22, snf30, snf59, sol1, ssr1, ssr2, ssr3, ssr4 and tfg3.

It is found in the nucleus. Component of the SWI/SNF complex, an ATP-dependent chromatin remodeling complex, which is required for the positive and negative regulation of gene expression of a large number of genes. It changes chromatin structure by altering DNA-histone contacts within a nucleosome, leading eventually to a change in nucleosome position, thus facilitating or repressing binding of gene-specific transcription factors. This Schizosaccharomyces pombe (strain 972 / ATCC 24843) (Fission yeast) protein is SWI/SNF global transcription activator complex subunit snf59 (snf59).